Here is a 1036-residue protein sequence, read N- to C-terminus: Histidine kinase 3 (1036 aa).

The Extracellular portion of the chain corresponds to 1–8 (MSLFHVLG). The chain crosses the membrane as a helical span at residues 9–29 (FGVKIGHLFWMLCCWFVSWFV). Residues 30–94 (DNGIEDKSGL…VKFNKAWWRK (65 aa)) are Cytoplasmic-facing. A helical transmembrane segment spans residues 95–115 (LVVVWVVFWVLVSIWTFWYFS). Residues 116–399 (SQAMEKRKET…CRFKQKPPWP (284 aa)) lie on the Extracellular side of the membrane. In terms of domain architecture, CHASE spans 163 to 389 (IPSAIDQRTF…GDPLRKHEMR (227 aa)). Residues 400–420 (VLSMVTSFGILVIALLVAHII) traverse the membrane as a helical segment. The Cytoplasmic segment spans residues 421 to 1036 (HATVSRIHKV…FFNSPSDTES (616 aa)). The Histidine kinase domain maps to 457–723 (TVSHEIRTPM…TFTFTAVFSN (267 aa)). The residue at position 460 (His460) is a Phosphohistidine; by autocatalysis. Response regulatory domains follow at residues 746–865 (KAVV…QRGL) and 891–1028 (KILI…SRFF). Position 941 is a 4-aspartylphosphate (Asp941).

Interacts with AHK2, AHK4, AHP1, AHP2, AHP3, AHP5 and At5g43560. Post-translationally, autophosphorylated predominantly on His residues. Activation probably requires a transfer of a phosphate group between a His in the transmitter domain and an Asp of the receiver domain. In terms of tissue distribution, mostly expressed in leaves and flowers, and, to a lower extent, in roots, stems, and siliques, especially in the vascular tissues. Present in seedlings.

It localises to the cell membrane. It is found in the endoplasmic reticulum membrane. It catalyses the reaction ATP + protein L-histidine = ADP + protein N-phospho-L-histidine.. Its activity is regulated as follows. Activated by cytokinins to initiate phosphorelay signaling. This cytokinin-mediated activation is repressed by the trans-zeatin antagonists 6-(2-hydroxy-3-methylbenzylamino)purine (PI-55) and 6-(2,5-Dihydroxybenzylamino)purine (LGR-991). Functionally, cytokinins (CK) receptor related to bacterial two-component regulators. Functions as a histidine kinase and transmits the stress signal to a downstream MAPK cascade. This protein undergoes an ATP-dependent autophosphorylation at a conserved histidine residue in the kinase core, and a phosphoryl group is then transferred to a conserved aspartate residue in the receiver domain. In the presence of cytokinin, feeds phosphate to phosphorelay-integrating histidine phosphotransfer protein (HPt) and activates subsequent cascade. Involved in meristems establishment in seedlings. Redundant negative regulator of drought and salt stress responses and abscisic acid (ABA) signaling. Together with AHK2, plays a negative regulatory role in cold stress signaling via inhibition of ABA response, occurring independently of the cold acclimation pathway. Redundant positive regulator of cytokinin signaling that regulates many developmental processes including seed germination, cell division, seed size, chlorophyll retention during leaf senescence, root repression and shoot promotion. Can interact with isoprenoid-type cytokinins trans-zeatin (tZ and tZR), cis-zeatin (cZ), dihydrozeatin (DZ), buta-2,3-dienyladenine (HA-8), penta-2,3-dienyladenine (HA-1), 4-methyl-penta-2,3-dienyladenine (HA-10), 4-hydroxy-2-butynyladenine (RM1), 2-propynyladenine (RM3), 2-butynyladenine (RM6), and cytokinin ribosides and ribotides. Together with AHK4, involved in the cytokinin-dependent responses to Pi starvation and sucrose stresses. Promotes cytokinin-mediated leaf longevity through a specific phosphorylation of the response regulator ARR2. Involved in alkamides (e.g. N-isobutyl decanamide) and N-acylethanolamides (NAE) signaling that control meristematic activity and differentiation processes during plant development. Contributes to vascular bundle formation and secondary growth in a cytokinin-dependent manner, probably by promoting the maintenance of mitotic activity and/or identity of procambial cells. Plays a role in the cytokinin-mediated repression of the iron uptake pathway. Required by the cytokinin-dependent flower development regulation pathway. In Arabidopsis thaliana (Mouse-ear cress), this protein is Histidine kinase 3 (AHK3).